The sequence spans 464 residues: Cytochrome P450 85A1 (464 aa).

Residues 2–22 (AFFLIFLSSFFGLCIFCTALL) traverse the membrane as a helical segment. Cys-414 is a heme binding site.

Belongs to the cytochrome P450 family. The cofactor is heme. As to expression, expressed in sub-meristematic regions of shoot and root apexes, in zones undergoing lateral root formation, in fruits, and in all flower parts, with a high expression in young flower buds and at the joint in the pedicel.

Its subcellular location is the membrane. The enzyme catalyses 6-deoxocastasterone + reduced [NADPH--hemoprotein reductase] + O2 = 6alpha-hydroxycastasterone + oxidized [NADPH--hemoprotein reductase] + H2O + H(+). It catalyses the reaction 6alpha-hydroxycastasterone + reduced [NADPH--hemoprotein reductase] + O2 = castasterone + oxidized [NADPH--hemoprotein reductase] + 2 H2O + H(+). It carries out the reaction 6-deoxocastasterone + 2 reduced [NADPH--hemoprotein reductase] + 2 O2 = castasterone + 2 oxidized [NADPH--hemoprotein reductase] + 3 H2O + 2 H(+). Its pathway is plant hormone biosynthesis; brassinosteroid biosynthesis. Catalyzes the C6-oxidation step in brassinosteroids biosynthesis. Converts 6-deoxocastasterone (6-deoxoCS) to castasterone (CS). May also convert 6-deoxoteasterone (6-deoxoTE) to teasterone (TE), 3-dehydro-6-deoxoteasterone (6-deoxo3DT, 6-deoxo3DHT) to 3-dehydroteasterone (3DT, 3-DHT), and 6-deoxotyphasterol (6-deoxoTY) to typhasterol (TY), but not castasterone (CS) to brassinolide (BL). The sequence is that of Cytochrome P450 85A1 from Solanum lycopersicum (Tomato).